A 387-amino-acid polypeptide reads, in one-letter code: F-box only protein 4 (387 aa).

Residues Ser12 and Ser48 each carry the phosphoserine modification. Positions 56–102 constitute an F-box domain; the sequence is ASTLTRLPIDVQLYILSFLSPHDLCQLGSTNHYWNETVRDPILWRYF.

Homodimer. Part of the SCF (SKP1-CUL1-F-box) E3 ubiquitin-protein ligase complex SCF(FBXO4) formed of CUL1, SKP1, RBX1 and FBXO4. Interacts with TERF1; this interaction is prevented in the presence of GNL3L. Identified in a complex with CRYAB and CCND1. Post-translationally, phosphorylation at Ser-12 varies during the cell cycle. It is low in resting cells and high in the S phase and the G2/M phase of the cell cycle. Phosphorylation is decreased during late G1 phase. Phosphorylation at Ser-12 promotes homodimerization and is necessary for optimal ubiquitin ligase activity towards CCND1.

Its subcellular location is the cytoplasm. The protein operates within protein modification; protein ubiquitination. In terms of biological role, substrate recognition component of a SCF (SKP1-CUL1-F-box protein) E3 ubiquitin-protein ligase complex that mediates the ubiquitination and subsequent proteasomal degradation of target proteins. Promotes ubiquitination of cyclin-D1 (CCND1) and its subsequent proteasomal degradation. However, it does not act as a major regulator of CCND1 stability during the G1/S transition. Recognizes TERF1 and promotes its ubiquitination together with UBE2D1. Promotes ubiquitination of FXR1 following phosphorylation of FXR1 by GSK3B, leading to FXR1 degradation by the proteasome. In Homo sapiens (Human), this protein is F-box only protein 4 (FBXO4).